We begin with the raw amino-acid sequence, 351 residues long: Ribosomal RNA large subunit methyltransferase M (351 aa).

S-adenosyl-L-methionine-binding positions include serine 183, 216–219 (APGG), aspartate 235, aspartate 255, and aspartate 271. The Proton acceptor role is filled by lysine 300.

It belongs to the class I-like SAM-binding methyltransferase superfamily. RNA methyltransferase RlmE family. RlmM subfamily. In terms of assembly, monomer.

It localises to the cytoplasm. It catalyses the reaction cytidine(2498) in 23S rRNA + S-adenosyl-L-methionine = 2'-O-methylcytidine(2498) in 23S rRNA + S-adenosyl-L-homocysteine + H(+). In terms of biological role, catalyzes the 2'-O-methylation at nucleotide C2498 in 23S rRNA. This is Ribosomal RNA large subunit methyltransferase M from Ectopseudomonas mendocina (strain ymp) (Pseudomonas mendocina).